Consider the following 253-residue polypeptide: Phosphoglycerate mutase 2 (253 aa).

T3 carries the post-translational modification Phosphothreonine. Substrate is bound by residues 10–17 (RHGESTWN), 23–24 (CG), R62, 89–92 (ERHY), K100, and 116–117 (RR). H11 acts as the Tele-phosphohistidine intermediate in catalysis. S14 is subject to Phosphoserine. E89 acts as the Proton donor/acceptor in catalysis. Residue S118 is modified to Phosphoserine. Residues Y132 and Y133 each carry the phosphotyrosine modification. S135 is modified (phosphoserine). Position 152 is a phosphothreonine (T152). 187–188 (GN) lines the substrate pocket.

Belongs to the phosphoglycerate mutase family. BPG-dependent PGAM subfamily. As to quaternary structure, homodimer. Interacts with ENO1. Expressed in the heart and muscle. Not found in the liver and brain.

It carries out the reaction (2R)-2-phosphoglycerate = (2R)-3-phosphoglycerate. The catalysed reaction is (2R)-3-phospho-glyceroyl phosphate = (2R)-2,3-bisphosphoglycerate + H(+). Functionally, interconversion of 3- and 2-phosphoglycerate with 2,3-bisphosphoglycerate as the primer of the reaction. Can also catalyze the reaction of EC 5.4.2.4 (synthase), but with a reduced activity. This Homo sapiens (Human) protein is Phosphoglycerate mutase 2 (PGAM2).